The primary structure comprises 292 residues: Bifunctional protein FolD 2 (292 aa).

NADP(+)-binding positions include 166–168 (GHS) and isoleucine 232.

This sequence belongs to the tetrahydrofolate dehydrogenase/cyclohydrolase family. Homodimer.

The enzyme catalyses (6R)-5,10-methylene-5,6,7,8-tetrahydrofolate + NADP(+) = (6R)-5,10-methenyltetrahydrofolate + NADPH. The catalysed reaction is (6R)-5,10-methenyltetrahydrofolate + H2O = (6R)-10-formyltetrahydrofolate + H(+). The protein operates within one-carbon metabolism; tetrahydrofolate interconversion. Catalyzes the oxidation of 5,10-methylenetetrahydrofolate to 5,10-methenyltetrahydrofolate and then the hydrolysis of 5,10-methenyltetrahydrofolate to 10-formyltetrahydrofolate. This chain is Bifunctional protein FolD 2, found in Ruegeria pomeroyi (strain ATCC 700808 / DSM 15171 / DSS-3) (Silicibacter pomeroyi).